The chain runs to 155 residues: Leader peptidase HopD (155 aa).

The protein belongs to the peptidase A24 family.

The chain is Leader peptidase HopD (hopD) from Escherichia coli.